Here is a 256-residue protein sequence, read N- to C-terminus: Probable transcriptional regulatory protein cce_0894 (256 aa).

The protein belongs to the TACO1 family.

It is found in the cytoplasm. In Crocosphaera subtropica (strain ATCC 51142 / BH68) (Cyanothece sp. (strain ATCC 51142)), this protein is Probable transcriptional regulatory protein cce_0894.